Reading from the N-terminus, the 495-residue chain is Aspartyl/glutamyl-tRNA(Asn/Gln) amidotransferase subunit B (495 aa).

Belongs to the GatB/GatE family. GatB subfamily. Heterotrimer of A, B and C subunits.

The catalysed reaction is L-glutamyl-tRNA(Gln) + L-glutamine + ATP + H2O = L-glutaminyl-tRNA(Gln) + L-glutamate + ADP + phosphate + H(+). It catalyses the reaction L-aspartyl-tRNA(Asn) + L-glutamine + ATP + H2O = L-asparaginyl-tRNA(Asn) + L-glutamate + ADP + phosphate + 2 H(+). In terms of biological role, allows the formation of correctly charged Asn-tRNA(Asn) or Gln-tRNA(Gln) through the transamidation of misacylated Asp-tRNA(Asn) or Glu-tRNA(Gln) in organisms which lack either or both of asparaginyl-tRNA or glutaminyl-tRNA synthetases. The reaction takes place in the presence of glutamine and ATP through an activated phospho-Asp-tRNA(Asn) or phospho-Glu-tRNA(Gln). This chain is Aspartyl/glutamyl-tRNA(Asn/Gln) amidotransferase subunit B, found in Gloeothece citriformis (strain PCC 7424) (Cyanothece sp. (strain PCC 7424)).